Consider the following 404-residue polypeptide: Metacaspase-1A (404 aa).

The segment covering 1–10 (MNPHHSHHHS) has biased composition (basic residues). The interval 1 to 100 (MNPHHSHHHS…PSDPVSFGQG (100 aa)) is disordered. Residues 24-51 (QQQPPSNPYQYNQPSPQPYQGSQPPQNG) are compositionally biased toward low complexity. Catalysis depends on residues histidine 200 and cysteine 256.

The protein belongs to the peptidase C14B family.

In terms of biological role, involved in cell death (apoptosis). In Aspergillus niger (strain ATCC MYA-4892 / CBS 513.88 / FGSC A1513), this protein is Metacaspase-1A (casA).